A 385-amino-acid polypeptide reads, in one-letter code: Flap endonuclease 1 (385 aa).

The N-domain stretch occupies residues 1–104 (MGILGLSKLI…GELAKRAERR (104 aa)). A Mg(2+)-binding site is contributed by Asp34. DNA is bound by residues Arg47 and Arg70. Positions 86, 158, 160, 179, and 181 each coordinate Mg(2+). The I-domain stretch occupies residues 122–253 (GIEKFNRRLV…KRAIELINTY (132 aa)). Residue Glu158 participates in DNA binding. DNA-binding residues include Gly231 and Asp233. Position 233 (Asp233) interacts with Mg(2+). The tract at residues 336-344 (TQVRLDSFF) is interaction with PCNA. Positions 346-385 (TLPSTPNATNAAKRKADEAKKSANNKKAKTSGGGRGRRPK) are disordered. Positions 368-385 (ANNKKAKTSGGGRGRRPK) are enriched in basic residues.

This sequence belongs to the XPG/RAD2 endonuclease family. FEN1 subfamily. As to quaternary structure, interacts with PCNA. Three molecules of FEN1 bind to one PCNA trimer with each molecule binding to one PCNA monomer. PCNA stimulates the nuclease activity without altering cleavage specificity. Mg(2+) is required as a cofactor. Phosphorylated. Phosphorylation upon DNA damage induces relocalization to the nuclear plasma.

Its subcellular location is the nucleus. It localises to the nucleolus. The protein localises to the nucleoplasm. It is found in the mitochondrion. Functionally, structure-specific nuclease with 5'-flap endonuclease and 5'-3' exonuclease activities involved in DNA replication and repair. During DNA replication, cleaves the 5'-overhanging flap structure that is generated by displacement synthesis when DNA polymerase encounters the 5'-end of a downstream Okazaki fragment. It enters the flap from the 5'-end and then tracks to cleave the flap base, leaving a nick for ligation. Also involved in the long patch base excision repair (LP-BER) pathway, by cleaving within the apurinic/apyrimidinic (AP) site-terminated flap. Acts as a genome stabilization factor that prevents flaps from equilibrating into structures that lead to duplications and deletions. Also possesses 5'-3' exonuclease activity on nicked or gapped double-stranded DNA, and exhibits RNase H activity. Also involved in replication and repair of rDNA and in repairing mitochondrial DNA. This is Flap endonuclease 1 from Drosophila sechellia (Fruit fly).